We begin with the raw amino-acid sequence, 63 residues long: Eumenitin VP1 (63 aa).

Residues 1–22 (MRGTSFILFAVVVILGFLHANA) form the signal peptide. AXPX repeat units follow at residues 22–25 (AEPL), 26–29 (ANPA), 32–35 (ANPD), 40–43 (ADPL), and 44–47 (ADPE). Positions 23-48 (EPLANPAPLANPDPLANADPLADPEA) are excised as a propeptide.

As to expression, expressed by the venom gland.

Its subcellular location is the secreted. The protein localises to the target cell membrane. Functionally, antimicrobial peptide with activities against the fungi B.cinerea (MIC=5 uM) and C.albicans (MIC=100 uM), the Gram-negative bacterium E.coli (MIC=25 uM) and the Gram-positive bacterium S.aureus (MIC=100 uM). Shows cytolytic activity against insect cell lines. Has no hemolytic activity against human erythrocytes. In vivo, peptide injection in the vicinity of the head and thorax of lepidopteran larvae induces feeding disorder followed by death due to starvation. This Eumenes pomiformis (Potter wasp) protein is Eumenitin VP1.